Reading from the N-terminus, the 240-residue chain is Mannosyl-D-glycerate transport/metabolism system repressor MngR (240 aa).

The 69-residue stretch at 4 to 72 (KPLYRQIADR…QGSGTYVKEE (69 aa)) folds into the HTH gntR-type domain. Residues 32-51 (ESALQTEFGVSRVTVRQALR) constitute a DNA-binding region (H-T-H motif).

Represses mngA and mngB. Regulates its own expression. This Escherichia coli (strain K12) protein is Mannosyl-D-glycerate transport/metabolism system repressor MngR (mngR).